We begin with the raw amino-acid sequence, 381 residues long: E3 ubiquitin-protein ligase ATL15 (381 aa).

An N-terminal signal peptide occupies residues 1–23 (MVVMSRVSFYSSFLLLLLEVVVA). Residues 40 to 60 (AIIMIVLVSVFFALGCISVYM) form a helical membrane-spanning segment. Residues 118–160 (CPVCLNEFEDDETLRLIPQCCHVFHPGCIDAWLRSQTTCPLCR) form an RING-type; atypical zinc finger.

Belongs to the RING-type zinc finger family. ATL subfamily.

Its subcellular location is the membrane. The catalysed reaction is S-ubiquitinyl-[E2 ubiquitin-conjugating enzyme]-L-cysteine + [acceptor protein]-L-lysine = [E2 ubiquitin-conjugating enzyme]-L-cysteine + N(6)-ubiquitinyl-[acceptor protein]-L-lysine.. Its pathway is protein modification; protein ubiquitination. E3 ubiquitin-protein ligase able to catalyze polyubiquitination with ubiquitin-conjugating enzyme E2 UBC8, UBC10, UBC11, UBC28 and UBC29 in vitro. This Arabidopsis thaliana (Mouse-ear cress) protein is E3 ubiquitin-protein ligase ATL15 (ATL15).